We begin with the raw amino-acid sequence, 453 residues long: tRNA hydroxylation protein P (453 aa).

The protein belongs to the peptidase U32 family.

Involved in prephenate-dependent formation of 5-hydroxyuridine (ho5U) modification at position 34 in tRNAs, the first step in 5-carboxymethoxyuridine (cmo5U) biosynthesis. Involved differently in ho5U formation in each tRNA; tRNA(Leu3) and tRNA(Pro3) are major targets of TrhP. The chain is tRNA hydroxylation protein P from Escherichia coli (strain K12).